Here is a 280-residue protein sequence, read N- to C-terminus: Probable protein VP2 (280 aa).

Disordered stretches follow at residues 46 to 167 and 200 to 280; these read LGAG…FFTS and AQLS…TYSN. Over residues 65-81 the composition is skewed to pro residues; it reads PEGPGGPPQHAPPNPPP. Gly residues predominate over residues 90-100; that stretch reads RGGGAGGAGDG. Residues 106 to 117 are compositionally biased toward acidic residues; sequence DAAEEYGPEDLD. Residues 227 to 251 show a composition bias toward basic residues; the sequence is AKTRRRVKKKPLSSKNKHTKKKKRS. Positions 252 to 266 are enriched in low complexity; the sequence is YSSSSPSSKDNTSES.

Post-translationally, phosphorylated at C-terminal serines.

The chain is Probable protein VP2 from Homo sapiens (Human).